The primary structure comprises 551 residues: Arginine--tRNA ligase (551 aa).

Positions 125–135 match the 'HIGH' region motif; the sequence is ANPTGPLHIGH.

This sequence belongs to the class-I aminoacyl-tRNA synthetase family. In terms of assembly, monomer.

The protein localises to the cytoplasm. It catalyses the reaction tRNA(Arg) + L-arginine + ATP = L-arginyl-tRNA(Arg) + AMP + diphosphate. In Oleidesulfovibrio alaskensis (strain ATCC BAA-1058 / DSM 17464 / G20) (Desulfovibrio alaskensis), this protein is Arginine--tRNA ligase.